The primary structure comprises 501 residues: Dipeptide and tripeptide permease A (501 aa).

Topologically, residues 1–21 (MSTANKKPTESVSLNAFKQPK) are cytoplasmic. Residues 22 to 44 (AFYLIFSIELWERFGYYGLQGIM) traverse the membrane as a helical segment. The Periplasmic portion of the chain corresponds to 45–59 (AVYLVKQLGMSEADS). The chain crosses the membrane as a helical span at residues 60-80 (ITLFSSFSALVYGLVAIGGWL). The Cytoplasmic segment spans residues 81–89 (GDKILGTKR). Residues 90-110 (VIMLGAVVLAIGYALVAWSGH) form a helical membrane-spanning segment. Asp-111 is a topological domain (periplasmic). Residues 112–132 (AGIVYMGMAAIAVGNGLFKAN) traverse the membrane as a helical segment. The Cytoplasmic segment spans residues 133–153 (PSSLLSTCYAKDDPRLDGAFT). A helical transmembrane segment spans residues 154-174 (MYYMSVNIGSFFSMLATPWLA). Residues 175–178 (ARYG) lie on the Periplasmic side of the membrane. Residues 179–199 (WSTAFALSVVGMLITVVNFAF) form a helical membrane-spanning segment. Over 200 to 219 (CQRWVKSYGSKPDFEPINFR) the chain is Cytoplasmic. Residues 220 to 240 (NLLLTIVGIVVLIAVATWLLH) form a helical membrane-spanning segment. At 241-246 (NQDIAR) the chain is on the periplasmic side. A helical membrane pass occupies residues 247–267 (MVLGVIALGIVIIFGKEAFSM). The Cytoplasmic portion of the chain corresponds to 268–274 (HGAARRK). A helical membrane pass occupies residues 275 to 295 (MIVAFILMLQAIIFFVLYSQM). Residues 296-320 (PTSLNFFAIRNVEHSILGIAFEPEQ) lie on the Periplasmic side of the membrane. The helical transmembrane segment at 321–341 (YQALNPFWIIIGSPILAAIYN) threads the bilayer. Over 342-352 (RMGDTLPMPMK) the chain is Cytoplasmic. Residues 353-373 (FAIGMVLCSGAFLILPLGAKF) traverse the membrane as a helical segment. Residues 374–383 (ANDAGIVSVN) lie on the Periplasmic side of the membrane. A helical membrane pass occupies residues 384–404 (WLIASYGLQSIGELMISGLGL). Topologically, residues 405 to 414 (AMVAQLVPQR) are cytoplasmic. Residues 415–435 (LMGFIMGSWFLTTAGANIIGG) form a helical membrane-spanning segment. Over 436–459 (YVANLMAVPSDVTDPLMSLEVYGR) the chain is Periplasmic. Residues 460–480 (VFMQIGIATAVIAVLMLLTAP) form a helical membrane-spanning segment. At 481–501 (KLNRMTQDDDTAEKGSKAATV) the chain is on the cytoplasmic side.

The protein belongs to the major facilitator superfamily. Proton-dependent oligopeptide transporter (POT/PTR) (TC 2.A.17) family. DtpA subfamily.

The protein resides in the cell inner membrane. Its function is as follows. Proton-dependent permease that transports di- and tripeptides. The polypeptide is Dipeptide and tripeptide permease A (Salmonella typhimurium (strain LT2 / SGSC1412 / ATCC 700720)).